Here is a 445-residue protein sequence, read N- to C-terminus: Exodeoxyribonuclease 7 large subunit (445 aa).

It belongs to the XseA family. As to quaternary structure, heterooligomer composed of large and small subunits.

The protein localises to the cytoplasm. It catalyses the reaction Exonucleolytic cleavage in either 5'- to 3'- or 3'- to 5'-direction to yield nucleoside 5'-phosphates.. Bidirectionally degrades single-stranded DNA into large acid-insoluble oligonucleotides, which are then degraded further into small acid-soluble oligonucleotides. The sequence is that of Exodeoxyribonuclease 7 large subunit from Xanthomonas oryzae pv. oryzae (strain PXO99A).